The following is a 355-amino-acid chain: Uroporphyrinogen decarboxylase (355 aa).

Residues 27–31, D77, Y154, T209, and H328 each bind substrate; that span reads RQAGR.

Belongs to the uroporphyrinogen decarboxylase family. In terms of assembly, homodimer.

Its subcellular location is the cytoplasm. It catalyses the reaction uroporphyrinogen III + 4 H(+) = coproporphyrinogen III + 4 CO2. The protein operates within porphyrin-containing compound metabolism; protoporphyrin-IX biosynthesis; coproporphyrinogen-III from 5-aminolevulinate: step 4/4. Catalyzes the decarboxylation of four acetate groups of uroporphyrinogen-III to yield coproporphyrinogen-III. This Colwellia psychrerythraea (strain 34H / ATCC BAA-681) (Vibrio psychroerythus) protein is Uroporphyrinogen decarboxylase.